The primary structure comprises 86 residues: MKTLPLTLVVVTIVCLDLGYTLTCLNCPEMFCGKFQICRNGEKICFKKLHQRRPFSLRYIRGCAATCPGTKPRDMVECCSTDRCNR.

An N-terminal signal peptide occupies residues 1 to 21 (MKTLPLTLVVVTIVCLDLGYT). Cystine bridges form between cysteine 24-cysteine 45, cysteine 27-cysteine 32, cysteine 38-cysteine 63, cysteine 67-cysteine 78, and cysteine 79-cysteine 84.

It belongs to the three-finger toxin family. Ancestral subfamily. Orphan group II sub-subfamily. In terms of tissue distribution, expressed by the venom gland.

It localises to the secreted. Binds with low affinity to muscular (alpha-1-beta-1-delta-epsilon/CHRNA1-CHRNB1-CHRND-CHRNE) and very low affinity to neuronal (alpha-7/CHRNA7) nicotinic acetylcholine receptor (nAChR). The polypeptide is Probable weak neurotoxin NNAM2I (Naja atra (Chinese cobra)).